A 218-amino-acid chain; its full sequence is N-alpha-acetyltransferase 11 (218 aa).

Positions 1–58 are interaction with NAA15; the sequence is MNIRNARPDDLMNMQHCNLLCLPENYQMKYYFYHGLSWPQLSYIAEDEDGKIVGYVLA. Residues 1–152 form the N-acetyltransferase domain; sequence MNIRNARPDD…DAYAMKRDLS (152 aa). A disordered region spans residues 175-218; the sequence is EETQGGTLPDAGEACLPKNPTSKDSGSSDSTDVQDSSEDLDSIS. Residues 196–205 are compositionally biased toward low complexity; the sequence is SKDSGSSDST. Positions 209–218 are enriched in acidic residues; it reads DSSEDLDSIS.

The protein belongs to the acetyltransferase family. ARD1 subfamily. Component of the N-terminal acetyltransferase A (NatA) complex composed of NAA11 and NAA15. Interacts with HIF1A.

It is found in the cytoplasm. The protein resides in the nucleus. The enzyme catalyses N-terminal glycyl-[protein] + acetyl-CoA = N-terminal N(alpha)-acetylglycyl-[protein] + CoA + H(+). It carries out the reaction N-terminal L-alanyl-[protein] + acetyl-CoA = N-terminal N(alpha)-acetyl-L-alanyl-[protein] + CoA + H(+). It catalyses the reaction N-terminal L-seryl-[protein] + acetyl-CoA = N-terminal N(alpha)-acetyl-L-seryl-[protein] + CoA + H(+). The catalysed reaction is N-terminal L-valyl-[protein] + acetyl-CoA = N-terminal N(alpha)-acetyl-L-valyl-[protein] + CoA + H(+). The enzyme catalyses N-terminal L-cysteinyl-[protein] + acetyl-CoA = N-terminal N(alpha)-acetyl-L-cysteinyl-[protein] + CoA + H(+). It carries out the reaction N-terminal L-threonyl-[protein] + acetyl-CoA = N-terminal N(alpha)-acetyl-L-threonyl-[protein] + CoA + H(+). Displays alpha (N-terminal) acetyltransferase activity. Proposed alternative catalytic subunit of the N-terminal acetyltransferase A (NatA) complex. The chain is N-alpha-acetyltransferase 11 (Naa11) from Mus musculus (Mouse).